The chain runs to 117 residues: Large ribosomal subunit protein bL20 (117 aa).

It belongs to the bacterial ribosomal protein bL20 family.

Functionally, binds directly to 23S ribosomal RNA and is necessary for the in vitro assembly process of the 50S ribosomal subunit. It is not involved in the protein synthesizing functions of that subunit. This Rickettsia akari (strain Hartford) protein is Large ribosomal subunit protein bL20.